Consider the following 37-residue polypeptide: TVSDPPARPAVFHSREELMNYVRELNRYFAIVGRPRF.

Phenylalanine amide is present on F37.

This sequence belongs to the NPY family. Expressed by the venom duct.

The protein localises to the secreted. In terms of biological role, causes hyperactivity such as jumping, rapid circling and tail flicking, when intraventricularly injected into mice brain. The chain is Neuropeptide Y1-like conopeptide from Conus betulinus (Beech cone).